A 179-amino-acid chain; its full sequence is MSLKTRYRETIRPKLLKDLGLKNVHQVPKVQKVTLNRGLGEAATNSKALEASLKEMATISGQKALVTRAKKAIATFKIRQGMPIGCSVTLRGDRMYAFLERFINLALPRIRDFRGVSPKSFDGRGNYTIGVKEQLIFPEITFDKVDTIRGMDITIVTSASSDEQGKALLSEMGMPFRKK.

This sequence belongs to the universal ribosomal protein uL5 family. In terms of assembly, part of the 50S ribosomal subunit; part of the 5S rRNA/L5/L18/L25 subcomplex. Contacts the 5S rRNA and the P site tRNA. Forms a bridge to the 30S subunit in the 70S ribosome.

Its function is as follows. This is one of the proteins that bind and probably mediate the attachment of the 5S RNA into the large ribosomal subunit, where it forms part of the central protuberance. In the 70S ribosome it contacts protein S13 of the 30S subunit (bridge B1b), connecting the 2 subunits; this bridge is implicated in subunit movement. Contacts the P site tRNA; the 5S rRNA and some of its associated proteins might help stabilize positioning of ribosome-bound tRNAs. This chain is Large ribosomal subunit protein uL5, found in Prochlorococcus marinus (strain NATL1A).